The following is a 749-amino-acid chain: Protein lin-54 homolog (749 aa).

A Glycyl lysine isopeptide (Lys-Gly) (interchain with G-Cter in SUMO2) cross-link involves residue K139. N6-acetyllysine occurs at positions 244 and 249. Phosphoserine occurs at positions 264, 282, 310, and 314. Residue K357 forms a Glycyl lysine isopeptide (Lys-Gly) (interchain with G-Cter in SUMO2) linkage. The CRC domain maps to 521 to 634; that stretch reads PRKPCNCTKS…KCIGCKNFEE (114 aa). The interval 523–536 is DNA-binding; that stretch reads KPCNCTKSLCLKLY. C525, C527, C532, C537, C539, C546, C549, C551, and C554 together coordinate Zn(2+). Residues 583 to 596 form a linker region; that stretch reads IGKGKEGESDRRHS. Zn(2+) is bound by residues C599, C601, C606, C611, C613, C620, C624, C626, and C629. The segment at 599–612 is DNA-binding; the sequence is CNCKRSGCLKNYCE. S635 is subject to Phosphoserine. Glycyl lysine isopeptide (Lys-Gly) (interchain with G-Cter in SUMO2) cross-links involve residues K639, K659, and K661.

It belongs to the lin-54 family. In terms of assembly, component of the DREAM complex (also named LINC complex) at least composed of E2F4, E2F5, LIN9, LIN37, LIN52, LIN54, MYBL1, MYBL2, RBL1, RBL2, RBBP4, RBL2, TFDP1 and TFDP2. The complex exists in quiescent cells where it represses cell cycle-dependent genes. It dissociates in S phase when LIN9, LIN37, LIN52 and LIN54 form a subcomplex that binds to MYBL2.

Its subcellular location is the nucleus. Its function is as follows. Component of the DREAM complex, a multiprotein complex that can both act as a transcription activator or repressor depending on the context. In G0 phase, the complex binds to more than 800 promoters and is required for repression of E2F target genes. In S phase, the complex selectively binds to the promoters of G2/M genes whose products are required for mitosis and participates in their cell cycle dependent activation. In the complex, acts as a DNA-binding protein that binds the promoter of CDK1 in a sequence-specific manner. Specifically recognizes the consensus motif 5'-TTYRAA-3' in target DNA. The protein is Protein lin-54 homolog (Lin54) of Mus musculus (Mouse).